A 332-amino-acid chain; its full sequence is CAX-interacting protein 4 (332 aa).

The segment at G33–Y59 is disordered. Residues S41–D54 are compositionally biased toward basic and acidic residues. The segment at G81–N98 adopts a CCHC-type zinc-finger fold. A compositionally biased stretch (basic and acidic residues) spans I124–V133. The tract at residues I124–E332 is disordered. The span at E134–S153 shows a compositional bias: acidic residues. Over residues E154 to F163 the composition is skewed to basic and acidic residues. Composition is skewed to basic residues over residues R198 to R214 and S227 to R236. The span at D241–D250 shows a compositional bias: acidic residues. Basic residues-rich tracts occupy residues V254–R269 and S314–E332.

In terms of assembly, interacts with CAX1. Expressed in leaves, stems and roots, and at lower levels in flowers.

It is found in the nucleus. May regulate CAX1 cation transporter. This is CAX-interacting protein 4 (CXIP4) from Arabidopsis thaliana (Mouse-ear cress).